The primary structure comprises 143 residues: uncharacterized protein (143 aa).

This is an uncharacterized protein from Archaeoglobus fulgidus (strain ATCC 49558 / DSM 4304 / JCM 9628 / NBRC 100126 / VC-16).